We begin with the raw amino-acid sequence, 225 residues long: Zinc finger protein 22 (225 aa).

The tract at residues 1–35 (MRLGKPKGGISRSSSQGKVYENQRKTGRQRQRWGM) is disordered. Lys18 is modified (N6-acetyllysine). 5 consecutive C2H2-type zinc fingers follow at residues 55–77 (YKCV…QKIH), 83–105 (HKCA…RRVH), 111–133 (YRCD…QRIH), 139–161 (YQCD…QRTH), and 167–189 (YQCS…TKVH). The disordered stretch occupies residues 183–225 (RQHTKVHEEEKPRKTRGRSLRAKTHSLSSWKAGKGRRSAAGLR). Over residues 195–206 (RKTRGRSLRAKT) the composition is skewed to basic residues.

The protein belongs to the krueppel C2H2-type zinc-finger protein family.

The protein resides in the nucleus. Functionally, binds DNA through the consensus sequence 5'-CAATG-3'. May be involved in transcriptional regulation and may play a role in tooth formation. The polypeptide is Zinc finger protein 22 (ZNF22) (Bos taurus (Bovine)).